The primary structure comprises 229 residues: Uracil-DNA glycosylase (229 aa).

Asp-64 acts as the Proton acceptor in catalysis.

The protein belongs to the uracil-DNA glycosylase (UDG) superfamily. UNG family. In terms of assembly, monomer.

The protein localises to the cytoplasm. It carries out the reaction Hydrolyzes single-stranded DNA or mismatched double-stranded DNA and polynucleotides, releasing free uracil.. Excises uracil residues from the DNA which can arise as a result of misincorporation of dUMP residues by DNA polymerase or due to deamination of cytosine. The polypeptide is Uracil-DNA glycosylase (Escherichia coli O157:H7).